A 434-amino-acid polypeptide reads, in one-letter code: Methylenetetrahydrofolate--tRNA-(uracil-5-)-methyltransferase TrmFO (434 aa).

Residue 8-13 coordinates FAD; that stretch reads GAGLAG.

The protein belongs to the MnmG family. TrmFO subfamily. The cofactor is FAD.

It localises to the cytoplasm. The enzyme catalyses uridine(54) in tRNA + (6R)-5,10-methylene-5,6,7,8-tetrahydrofolate + NADH + H(+) = 5-methyluridine(54) in tRNA + (6S)-5,6,7,8-tetrahydrofolate + NAD(+). It carries out the reaction uridine(54) in tRNA + (6R)-5,10-methylene-5,6,7,8-tetrahydrofolate + NADPH + H(+) = 5-methyluridine(54) in tRNA + (6S)-5,6,7,8-tetrahydrofolate + NADP(+). Catalyzes the folate-dependent formation of 5-methyl-uridine at position 54 (M-5-U54) in all tRNAs. The sequence is that of Methylenetetrahydrofolate--tRNA-(uracil-5-)-methyltransferase TrmFO from Exiguobacterium sibiricum (strain DSM 17290 / CCUG 55495 / CIP 109462 / JCM 13490 / 255-15).